Reading from the N-terminus, the 185-residue chain is Segregation and condensation protein B (185 aa).

This sequence belongs to the ScpB family. As to quaternary structure, homodimer. Homodimerization may be required to stabilize the binding of ScpA to the Smc head domains. Component of a cohesin-like complex composed of ScpA, ScpB and the Smc homodimer, in which ScpA and ScpB bind to the head domain of Smc. The presence of the three proteins is required for the association of the complex with DNA.

It is found in the cytoplasm. Its function is as follows. Participates in chromosomal partition during cell division. May act via the formation of a condensin-like complex containing Smc and ScpA that pull DNA away from mid-cell into both cell halves. This Carboxydothermus hydrogenoformans (strain ATCC BAA-161 / DSM 6008 / Z-2901) protein is Segregation and condensation protein B.